The primary structure comprises 647 residues: Neutral endopeptidase (647 aa).

Positions methionine 1–tryptophan 647 constitute a Peptidase M13 domain. Zn(2+) is bound at residue histidine 496. Glutamate 497 is a catalytic residue. Positions 500 and 556 each coordinate Zn(2+). Aspartate 560 (proton donor) is an active-site residue.

The protein belongs to the peptidase M13 family. The cofactor is Zn(2+).

In Lactobacillus helveticus (Lactobacillus suntoryeus), this protein is Neutral endopeptidase (pepO).